We begin with the raw amino-acid sequence, 235 residues long: Secretory carrier-associated membrane protein 5 (235 aa).

At 1 to 39 (MAEKVNNFPPLPKFIPLKPCFYQDFEADIPPQHVSMTKR) the chain is on the cytoplasmic side. Residues 40-60 (LYYLWMLNSVTLAVNLVGCLA) form a helical membrane-spanning segment. The Extracellular portion of the chain corresponds to 61-67 (WLIGGGG). Residues 68–88 (ATNFGLAFLWLILFTPCSYVC) traverse the membrane as a helical segment. Residues 89–102 (WFRPIYKAFKTDSS) are Cytoplasmic-facing. A helical membrane pass occupies residues 103 to 125 (FSFMAFFFTFMAQLVISIIQAVG). The Extracellular segment spans residues 126 to 148 (IPGWGVCGWIATISFFGTNIGSA). A helical transmembrane segment spans residues 149-169 (VVMLIPTVMFTVMAVFSFIAL). Residues 170 to 235 (SMVHKFYRGS…TPNYTYSNEM (66 aa)) are Cytoplasmic-facing.

The protein belongs to the SCAMP family. SCAMP5 subfamily. Interacts (via C-terminal part) with SYT1 and SYT2; interaction with synaptotagmins making a link with the SNARE molecules. Interacts with SLC9A7. As to expression, expressed both by neuronal and non-neuronal tissues. Expressed in brain, stomach, thyroid, spinal cord, lymph node, trachea, adrenal gland, bone marrow and in the different parts of brain. In thyroid tissues, it is expressed by the follicular epithelial cells. In the adrenal gland tissues it is detected in the zona fasciculata of the cortex region (at protein level).

The protein resides in the cell membrane. It is found in the golgi apparatus membrane. Its subcellular location is the golgi apparatus. It localises to the trans-Golgi network membrane. The protein localises to the recycling endosome membrane. The protein resides in the cytoplasmic vesicle. It is found in the secretory vesicle. Its subcellular location is the synaptic vesicle membrane. In terms of biological role, required for the calcium-dependent exocytosis of signal sequence-containing cytokines such as CCL5. Probably acts in cooperation with the SNARE machinery. May play a role in accumulation of expanded polyglutamine (polyQ) protein huntingtin (HTT) in case of endoplasmic reticulum stress by inhibiting the endocytosis pathway. This is Secretory carrier-associated membrane protein 5 (SCAMP5) from Homo sapiens (Human).